The chain runs to 271 residues: Regulatory protein RecX (271 aa).

Belongs to the RecX family.

It localises to the cytoplasm. Modulates RecA activity. The polypeptide is Regulatory protein RecX (Lactobacillus gasseri (strain ATCC 33323 / DSM 20243 / BCRC 14619 / CIP 102991 / JCM 1131 / KCTC 3163 / NCIMB 11718 / NCTC 13722 / AM63)).